The primary structure comprises 501 residues: Lysine--tRNA ligase (501 aa).

Mg(2+) contacts are provided by Glu411 and Glu418.

Belongs to the class-II aminoacyl-tRNA synthetase family. Homodimer. It depends on Mg(2+) as a cofactor.

It is found in the cytoplasm. The catalysed reaction is tRNA(Lys) + L-lysine + ATP = L-lysyl-tRNA(Lys) + AMP + diphosphate. The sequence is that of Lysine--tRNA ligase from Pseudomonas aeruginosa (strain LESB58).